Consider the following 247-residue polypeptide: 23S rRNA (guanosine-2'-O-)-methyltransferase RlmB (247 aa).

Residues glycine 197, isoleucine 217, and leucine 226 each contribute to the S-adenosyl-L-methionine site.

This sequence belongs to the class IV-like SAM-binding methyltransferase superfamily. RNA methyltransferase TrmH family. RlmB subfamily.

The protein resides in the cytoplasm. The catalysed reaction is guanosine(2251) in 23S rRNA + S-adenosyl-L-methionine = 2'-O-methylguanosine(2251) in 23S rRNA + S-adenosyl-L-homocysteine + H(+). Functionally, specifically methylates the ribose of guanosine 2251 in 23S rRNA. The polypeptide is 23S rRNA (guanosine-2'-O-)-methyltransferase RlmB (Burkholderia sp).